The following is a 329-amino-acid chain: Replication factor C small subunit (329 aa).

51 to 58 (GPPGTGKT) lines the ATP pocket.

Belongs to the activator 1 small subunits family. RfcS subfamily. As to quaternary structure, heteromultimer composed of small subunits (RfcS) and large subunits (RfcL).

In terms of biological role, part of the RFC clamp loader complex which loads the PCNA sliding clamp onto DNA. This chain is Replication factor C small subunit, found in Staphylothermus marinus (strain ATCC 43588 / DSM 3639 / JCM 9404 / F1).